The following is a 247-amino-acid chain: MSHRDTLFSAPIARLGDWTFDERVAEVFPDMIQRSVPGYSNIISMIGMLAERFVQPGTQVYDLGCSLGAATLSVRRNIHHDNCKIIAIDNSPAMIERCRRHIDAYKAPTPVDVIEGDIRDIAIENASMVVLNFTLQFLEPSERQALLDKIYQGLNPGGALVLSEKFSFEDAKVGELLFNMHHDFKRANGYSELEISQKRSMLENVMLTDSVETHKARLHKAGFEHSELWFQCFNFGSLVALKAEDAA.

Residues Y39, 64–66 (GCS), 89–90 (DN), 117–118 (DI), N132, and R199 each bind S-adenosyl-L-methionine.

The protein belongs to the class I-like SAM-binding methyltransferase superfamily. Cx-SAM synthase family. Homodimer.

The enzyme catalyses prephenate + S-adenosyl-L-methionine = carboxy-S-adenosyl-L-methionine + 3-phenylpyruvate + H2O. Functionally, catalyzes the conversion of S-adenosyl-L-methionine (SAM) to carboxy-S-adenosyl-L-methionine (Cx-SAM). The sequence is that of Carboxy-S-adenosyl-L-methionine synthase from Escherichia coli O139:H28 (strain E24377A / ETEC).